We begin with the raw amino-acid sequence, 439 residues long: UDP-N-acetylmuramate--L-alanine ligase (439 aa).

ATP is bound at residue 113-119; the sequence is GSHGKTS.

It belongs to the MurCDEF family.

It localises to the cytoplasm. The catalysed reaction is UDP-N-acetyl-alpha-D-muramate + L-alanine + ATP = UDP-N-acetyl-alpha-D-muramoyl-L-alanine + ADP + phosphate + H(+). It functions in the pathway cell wall biogenesis; peptidoglycan biosynthesis. Functionally, cell wall formation. The sequence is that of UDP-N-acetylmuramate--L-alanine ligase from Lactobacillus delbrueckii subsp. bulgaricus (strain ATCC 11842 / DSM 20081 / BCRC 10696 / JCM 1002 / NBRC 13953 / NCIMB 11778 / NCTC 12712 / WDCM 00102 / Lb 14).